The chain runs to 143 residues: Large ribosomal subunit protein uL11 (143 aa).

The protein belongs to the universal ribosomal protein uL11 family. As to quaternary structure, part of the ribosomal stalk of the 50S ribosomal subunit. Interacts with L10 and the large rRNA to form the base of the stalk. L10 forms an elongated spine to which L12 dimers bind in a sequential fashion forming a multimeric L10(L12)X complex. Post-translationally, one or more lysine residues are methylated.

Forms part of the ribosomal stalk which helps the ribosome interact with GTP-bound translation factors. The protein is Large ribosomal subunit protein uL11 of Cupriavidus pinatubonensis (strain JMP 134 / LMG 1197) (Cupriavidus necator (strain JMP 134)).